The primary structure comprises 317 residues: Nitrilase (317 aa).

The CN hydrolase domain maps to 5 to 280 (VKVAVVQAEP…DGVIISELDM (276 aa)). Glutamate 45 functions as the Proton acceptor in the catalytic mechanism. Lysine 125 is an active-site residue. The active-site Nucleophile is the cysteine 165.

The protein belongs to the carbon-nitrogen hydrolase superfamily. Nitrilase family.

The catalysed reaction is a nitrile + 2 H2O = a carboxylate + NH4(+). In terms of biological role, nitrilase that hydrolyzes preferentially 4-cyanopyridine. Is also able to hydrolyze some aliphatic nitriles, such as phenylacetonitrile. The chain is Nitrilase from Meyerozyma guilliermondii (strain ATCC 6260 / CBS 566 / DSM 6381 / JCM 1539 / NBRC 10279 / NRRL Y-324) (Yeast).